Consider the following 667-residue polypeptide: Fatty acyl-CoA synthetase A (667 aa).

This sequence belongs to the ATP-dependent AMP-binding enzyme family.

It is found in the endosome membrane. It catalyses the reaction a long-chain fatty acid + ATP + CoA = a long-chain fatty acyl-CoA + AMP + diphosphate. Functionally, long chain fatty acid acyl-CoA synthetases catalyze the formation of a thiester bond between a free fatty acid and coenzyme A during fatty acid metabolic process. May mediate fatty acid retrieval from the lumen of endosomes into the cytoplasm. This chain is Fatty acyl-CoA synthetase A (fcsA), found in Dictyostelium discoideum (Social amoeba).